The primary structure comprises 207 residues: Ribosomal RNA small subunit methyltransferase G (207 aa).

Residues Gly-71, Phe-76, 122–123, and Arg-135 each bind S-adenosyl-L-methionine; that span reads AE.

Belongs to the methyltransferase superfamily. RNA methyltransferase RsmG family.

The protein localises to the cytoplasm. Specifically methylates the N7 position of a guanine in 16S rRNA. The sequence is that of Ribosomal RNA small subunit methyltransferase G from Cytophaga hutchinsonii (strain ATCC 33406 / DSM 1761 / CIP 103989 / NBRC 15051 / NCIMB 9469 / D465).